Consider the following 78-residue polypeptide: Acyl carrier protein (78 aa).

The 76-residue stretch at 2 to 77 folds into the Carrier domain; it reads SEIASRVKAI…DAVSYIEANA (76 aa). S37 is subject to O-(pantetheine 4'-phosphoryl)serine.

Belongs to the acyl carrier protein (ACP) family. In terms of processing, 4'-phosphopantetheine is transferred from CoA to a specific serine of apo-ACP by AcpS. This modification is essential for activity because fatty acids are bound in thioester linkage to the sulfhydryl of the prosthetic group.

The protein localises to the cytoplasm. Its pathway is lipid metabolism; fatty acid biosynthesis. Its function is as follows. Carrier of the growing fatty acid chain in fatty acid biosynthesis. The protein is Acyl carrier protein of Phocaeicola vulgatus (strain ATCC 8482 / DSM 1447 / JCM 5826 / CCUG 4940 / NBRC 14291 / NCTC 11154) (Bacteroides vulgatus).